A 281-amino-acid chain; its full sequence is AT-hook motif nuclear-localized protein 20 (281 aa).

Disordered stretches follow at residues 43-85 (MNQS…APIF) and 216-247 (MEEEEDGGGSRQIHGGGDSPPRIGSNLPDLSG). Residues 67 to 79 (RRPRGRPPGSKNK) constitute a DNA-binding region (a.T hook). Residues 91–229 (PNALRSHVLE…EDGGGSRQIH (139 aa)) form the PPC domain.

It localises to the nucleus. Transcription factor that specifically binds AT-rich DNA sequences related to the nuclear matrix attachment regions (MARs). Negatively regulates plant innate immunity (PTI) to pathogens through the down-regulation of the PAMP-triggered NHO1 and FRK1 expression. This is AT-hook motif nuclear-localized protein 20 from Arabidopsis thaliana (Mouse-ear cress).